We begin with the raw amino-acid sequence, 368 residues long: Peptide chain release factor 2 (368 aa).

Position 251 is an N5-methylglutamine (glutamine 251).

It belongs to the prokaryotic/mitochondrial release factor family. Methylated by PrmC. Methylation increases the termination efficiency of RF2.

Its subcellular location is the cytoplasm. Functionally, peptide chain release factor 2 directs the termination of translation in response to the peptide chain termination codons UGA and UAA. In Wolinella succinogenes (strain ATCC 29543 / DSM 1740 / CCUG 13145 / JCM 31913 / LMG 7466 / NCTC 11488 / FDC 602W) (Vibrio succinogenes), this protein is Peptide chain release factor 2.